The chain runs to 916 residues: Alanine--tRNA ligase (916 aa).

The Zn(2+) site is built by His-611, His-615, Cys-714, and His-718.

Belongs to the class-II aminoacyl-tRNA synthetase family. Zn(2+) is required as a cofactor.

It is found in the cytoplasm. It catalyses the reaction tRNA(Ala) + L-alanine + ATP = L-alanyl-tRNA(Ala) + AMP + diphosphate. In terms of biological role, catalyzes the attachment of alanine to tRNA(Ala) in a two-step reaction: alanine is first activated by ATP to form Ala-AMP and then transferred to the acceptor end of tRNA(Ala). Also edits incorrectly charged Ser-tRNA(Ala) and Gly-tRNA(Ala) via its editing domain. In Methanospirillum hungatei JF-1 (strain ATCC 27890 / DSM 864 / NBRC 100397 / JF-1), this protein is Alanine--tRNA ligase.